A 300-amino-acid chain; its full sequence is O-methyltransferase phiE (300 aa).

S-adenosyl-L-methionine-binding positions include 130 to 131 and 157 to 158; these read DL and DV.

Belongs to the class I-like SAM-binding methyltransferase superfamily. In terms of assembly, homodimer.

The enzyme catalyses phomoidride A + S-adenosyl-L-methionine = (-)-phomoidride B + methanol + S-adenosyl-L-homocysteine + H(+). It functions in the pathway secondary metabolite biosynthesis. O-methyltransferase; part of the gene cluster that mediates the biosynthesis of the antihypercholesterolemic agents phomoidrides which are dimeric anhydrides. Within the pathway, phiE catalyzes the acetalization reaction that converts phomoidride A to phomoidride B. The pathway begins with the highly reducing polyketide synthase phiA that catalyzes the formation of a C12-fatty acyl-ACP, starting from one acetate and 5 malonate units. The hydrolase phiM is involved in the release of the C12-fatty acyl chain from phiA. The alkylcitrate synthase (ACS) phiJ and the alkylcitrate dehydratase (ACDH) phiI then give rise to decarboxylated monomeric anhydrides by coupling the C12-fatty acyl chain with oxalacetic acid. The cyclase phiC is responsible for the dimerization of the monomeric anhydrides which leads to the production of prephomoidride that contains the characteristic bicyclo[4.3.1]deca-1,6-diene system of phomoidrides. Iterative oxidation catalyzed by the alpha-ketoglutarate-dependent dioxygenase phiK produced then phomoidride A. Finally, the methyltransferase phiE converts phomoidride A to phomoidride B via an acetalization reaction. The phosphatidylethanolamine-binding protein phiB and phiN are not essential for dimerization and their functions have still to be determined. The polypeptide is O-methyltransferase phiE (Fungal sp. (strain ATCC 74256)).